The chain runs to 154 residues: Large ribosomal subunit protein uL13 (154 aa).

The protein belongs to the universal ribosomal protein uL13 family. As to quaternary structure, part of the 50S ribosomal subunit.

Its function is as follows. This protein is one of the early assembly proteins of the 50S ribosomal subunit, although it is not seen to bind rRNA by itself. It is important during the early stages of 50S assembly. In Rhizobium etli (strain ATCC 51251 / DSM 11541 / JCM 21823 / NBRC 15573 / CFN 42), this protein is Large ribosomal subunit protein uL13.